Reading from the N-terminus, the 22-residue chain is thr operon leader peptide (22 aa).

Belongs to the thr operon leader peptide family.

In terms of biological role, this protein is involved in control of the biosynthesis of threonine. The chain is thr operon leader peptide from Klebsiella pneumoniae (strain 342).